The primary structure comprises 1225 residues: ABC transporter B family member 18 (1225 aa).

6 consecutive transmembrane segments (helical) span residues Met23–Ile43, Val70–Trp90, Leu146–Trp168, Ile172–Arg194, Gly252–Gly272, and Gly284–Leu304. The ABC transmembrane type-1 1 domain occupies Met23–Glu312. An ABC transporter 1 domain is found at Val347 to Arg583. Residue Gly382 to Ser389 coordinates ATP. An N-linked (GlcNAc...) asparagine glycan is attached at Asn530. Transmembrane regions (helical) follow at residues Ala657–Ser677 and Ile699–His719. The ABC transmembrane type-1 2 domain occupies Ala657–Lys945. An N-linked (GlcNAc...) asparagine glycan is attached at Asn754. 4 helical membrane-spanning segments follow: residues Leu780–Trp800, Ile804–Leu824, Ser880–Leu900, and Phe919–Met939. N-linked (GlcNAc...) asparagine glycosylation is found at Asn960 and Asn1000. Positions Ile980–Val1218 constitute an ABC transporter 2 domain. Gly1015–Ser1022 contacts ATP. The N-linked (GlcNAc...) asparagine glycan is linked to Asn1201.

The protein belongs to the ABC transporter superfamily. ABCB family. Multidrug resistance exporter (TC 3.A.1.201) subfamily.

It is found in the membrane. The sequence is that of ABC transporter B family member 18 (ABCB18) from Arabidopsis thaliana (Mouse-ear cress).